The following is a 196-amino-acid chain: Small ribosomal subunit protein uS4c (196 aa).

Residues 15–42 are disordered; that stretch reads LGALPGLTRKTPKSGSNQKKKFNSGKKE. An S4 RNA-binding domain is found at 89–150; that stretch reads MRLDNILFRL…NQRSKRLVQN (62 aa).

This sequence belongs to the universal ribosomal protein uS4 family. As to quaternary structure, part of the 30S ribosomal subunit. Contacts protein S5. The interaction surface between S4 and S5 is involved in control of translational fidelity.

The protein localises to the plastid. The protein resides in the chloroplast. Its function is as follows. One of the primary rRNA binding proteins, it binds directly to 16S rRNA where it nucleates assembly of the body of the 30S subunit. With S5 and S12 plays an important role in translational accuracy. The chain is Small ribosomal subunit protein uS4c (rps4) from Cenchrus longisetus (Feathertop).